Here is a 587-residue protein sequence, read N- to C-terminus: Aspartate--tRNA ligase (587 aa).

L-aspartate is bound at residue Glu174. Positions 198 to 201 (QITK) are aspartate. Arg220 is an L-aspartate binding site. ATP-binding positions include 220–222 (RDE) and Gln229. His443 is an L-aspartate binding site. Residue Glu477 coordinates ATP. Arg484 is a binding site for L-aspartate. ATP is bound at residue 529-532 (GLDR).

The protein belongs to the class-II aminoacyl-tRNA synthetase family. Type 1 subfamily. As to quaternary structure, homodimer.

It is found in the cytoplasm. It catalyses the reaction tRNA(Asp) + L-aspartate + ATP = L-aspartyl-tRNA(Asp) + AMP + diphosphate. In terms of biological role, catalyzes the attachment of L-aspartate to tRNA(Asp) in a two-step reaction: L-aspartate is first activated by ATP to form Asp-AMP and then transferred to the acceptor end of tRNA(Asp). This is Aspartate--tRNA ligase from Streptococcus pneumoniae serotype 2 (strain D39 / NCTC 7466).